We begin with the raw amino-acid sequence, 414 residues long: MFDRQNTLAKTDPQLWAAIQNENKRQEDHIELIASENYTSPAVMEAQGSQLTNKYAEGYPGKRYYGGCEFVDVAEQLAIDRVKALFGAEAANVQPHCGASANQAVFLAFLKPGDTFMGMSLAEGGHLTHGMALNMSGKWFNPIAYGLDKNEEIDYEQMERLAREHKPKLIIAGASAYSKKIDFERIGKLAKEVGAIFMVDMAHYAGLVAAGVYPNPVPHADIVTSTTHKSLRGPRGGIILMKAEHEKAINSAVFPGLQGGPLMHVIAGKAAAFKEAAEPGFKDYQKQVVANAKALAETLIARGLRIVSGGTDSHVMLVDLRAKKMTGKEAEHVLGEAHITCNKNGIPNDPEKPMVTSGIRLGSPAMTTRGFKEAEAVQVGNFIADVLDNPNDPENIAKVRAQVAELTKRFPVYG.

Residues L121 and 125–127 (GHL) contribute to the (6S)-5,6,7,8-tetrahydrofolate site. K229 carries the post-translational modification N6-(pyridoxal phosphate)lysine.

It belongs to the SHMT family. In terms of assembly, homodimer. Requires pyridoxal 5'-phosphate as cofactor.

The protein localises to the cytoplasm. It catalyses the reaction (6R)-5,10-methylene-5,6,7,8-tetrahydrofolate + glycine + H2O = (6S)-5,6,7,8-tetrahydrofolate + L-serine. Its pathway is one-carbon metabolism; tetrahydrofolate interconversion. It functions in the pathway amino-acid biosynthesis; glycine biosynthesis; glycine from L-serine: step 1/1. Its function is as follows. Catalyzes the reversible interconversion of serine and glycine with tetrahydrofolate (THF) serving as the one-carbon carrier. This reaction serves as the major source of one-carbon groups required for the biosynthesis of purines, thymidylate, methionine, and other important biomolecules. Also exhibits THF-independent aldolase activity toward beta-hydroxyamino acids, producing glycine and aldehydes, via a retro-aldol mechanism. The polypeptide is Serine hydroxymethyltransferase (Polynucleobacter asymbioticus (strain DSM 18221 / CIP 109841 / QLW-P1DMWA-1) (Polynucleobacter necessarius subsp. asymbioticus)).